The following is a 418-amino-acid chain: Hepatic and glial cell adhesion molecule (418 aa).

The first 33 residues, 1–33 (MKRERGALSRASRALRLSPFVYLLLIQPVPLEG), serve as a signal peptide directing secretion. The Ig-like V-type domain occupies 34 to 142 (VNITSPVRLI…GEKTINLTVD (109 aa)). Residues 34 to 240 (VNITSPVRLI…VKITVYRRSS (207 aa)) lie on the Extracellular side of the membrane. Asn-35, Asn-138, Asn-167, and Asn-189 each carry an N-linked (GlcNAc...) asparagine glycan. Positions 148–234 (PQVLVASTTV…QVRSLPVKIT (87 aa)) constitute an Ig-like C2-type domain. A disulfide bond links Cys-168 and Cys-217. The chain crosses the membrane as a helical span at residues 241–261 (LYIILSTGGIFLLVTLVTVCA). The Cytoplasmic segment spans residues 262 to 418 (CWKPSKKSRK…DESGQVEISA (157 aa)). The interval 271–418 (KKRKLEKQNS…DESGQVEISA (148 aa)) is disordered. Phosphoserine is present on Ser-280. Residues 287-308 (NDDRLKSEADTLPRSGEQERKN) show a composition bias toward basic and acidic residues. A phosphoserine mark is found at Ser-321, Ser-352, and Ser-379. Over residues 341-358 (GYSVSPPVPGRSPGLPIR) the composition is skewed to low complexity. Over residues 385-396 (SSPGRSRSSSRS) the composition is skewed to low complexity.

As to quaternary structure, homodimer. Dimer formation occurs predominantly through cis interactions on the cell surface. Part of a complex containing MLC1, TRPV4, AQP4 and ATP1B1. Interacts with CLCN2. N-glycosylated.

The protein localises to the cytoplasm. It is found in the cell membrane. In terms of biological role, involved in regulating cell motility and cell-matrix interactions. May inhibit cell growth through suppression of cell proliferation. In glia, associates and targets CLCN2 at astrocytic processes and myelinated fiber tracts where it may regulate transcellular chloride flux involved in neuron excitability. The chain is Hepatic and glial cell adhesion molecule from Mus musculus (Mouse).